Reading from the N-terminus, the 340-residue chain is Ferrochelatase (340 aa).

Residues histidine 189 and glutamate 292 each coordinate Fe cation.

It belongs to the ferrochelatase family.

It is found in the cytoplasm. The catalysed reaction is heme b + 2 H(+) = protoporphyrin IX + Fe(2+). The protein operates within porphyrin-containing compound metabolism; protoheme biosynthesis; protoheme from protoporphyrin-IX: step 1/1. Catalyzes the ferrous insertion into protoporphyrin IX. The polypeptide is Ferrochelatase (Pseudomonas fluorescens (strain ATCC BAA-477 / NRRL B-23932 / Pf-5)).